We begin with the raw amino-acid sequence, 882 residues long: Translation initiation factor IF-2 (882 aa).

A disordered region spans residues 57–211; sequence YIPANKTKDK…KDKSKPKVAT (155 aa). The span at 104-115 shows a compositional bias: basic and acidic residues; that stretch reads TTSEKQKDKGEQ. A compositionally biased stretch (basic residues) spans 199–211; the sequence is RHKKDKSKPKVAT. The region spanning 381 to 550 is the tr-type G domain; sequence ERPPVVTIMG…LIQAEVLELK (170 aa). A G1 region spans residues 390 to 397; it reads GHVDHGKT. GTP is bound at residue 390 to 397; it reads GHVDHGKT. The interval 415-419 is G2; it reads GITQH. The segment at 436–439 is G3; that stretch reads DTPG. GTP contacts are provided by residues 436–440 and 490–493; these read DTPGH and NKMD. The segment at 490–493 is G4; sequence NKMD. The interval 526–528 is G5; the sequence is SAK.

Belongs to the TRAFAC class translation factor GTPase superfamily. Classic translation factor GTPase family. IF-2 subfamily.

The protein localises to the cytoplasm. Its function is as follows. One of the essential components for the initiation of protein synthesis. Protects formylmethionyl-tRNA from spontaneous hydrolysis and promotes its binding to the 30S ribosomal subunits. Also involved in the hydrolysis of GTP during the formation of the 70S ribosomal complex. This Helicobacter hepaticus (strain ATCC 51449 / 3B1) protein is Translation initiation factor IF-2.